Consider the following 484-residue polypeptide: UDP-N-acetylmuramate--L-alanine ligase (484 aa).

ATP is bound at residue 126-132 (GTHGKTT).

Belongs to the MurCDEF family.

The protein localises to the cytoplasm. It carries out the reaction UDP-N-acetyl-alpha-D-muramate + L-alanine + ATP = UDP-N-acetyl-alpha-D-muramoyl-L-alanine + ADP + phosphate + H(+). Its pathway is cell wall biogenesis; peptidoglycan biosynthesis. Functionally, cell wall formation. In Aeromonas hydrophila subsp. hydrophila (strain ATCC 7966 / DSM 30187 / BCRC 13018 / CCUG 14551 / JCM 1027 / KCTC 2358 / NCIMB 9240 / NCTC 8049), this protein is UDP-N-acetylmuramate--L-alanine ligase.